We begin with the raw amino-acid sequence, 110 residues long: uncharacterized protein (110 aa).

Residues 18–34 (MFPLISTFTSIGLGVLM) form a helical membrane-spanning segment.

It localises to the membrane. This is an uncharacterized protein from Saccharomyces cerevisiae (strain ATCC 204508 / S288c) (Baker's yeast).